Here is a 491-residue protein sequence, read N- to C-terminus: MGFENEKNSSILSKLATNEELGENSPYFDGWKAYDNDPFHPLKNPNGVIQMGLAENQLCFDLIEEWIKRNPNASICTTEGIKSFRAIANFQDYHGLPEFRSAIAKFMEKTRGGRVTFDPERVVMAGGATGANETIIFCLADTGDAFLVPSPYYPAFNRDLRWRTGVQLIPIPCDSSNNFQITTKAVREAYENAQKSNIKVKGLILTNPSNPLGTTLDRDTLKNLLTFTNQHNIHLVCDEIYAATVFNTPQFVSIAEILDDETSHCNKDLVHIVYSLSKDMGLPGFRVGIVYSFNDAVVNCARKMSSFGLVSTQTQYLLAEMLSDERFVSNFLTESSKRLAKRHKHFTNGLEEVGIKCLRSNAGLFCWMDLRPLLKESTFDSEMSLWRVIINDVKLNVSPGSSFDCQEPGFFRVCFANMDDETVDIALARIRSFVGVKKSGDESTPILMEKKQQWKKNNLRLSFSKRMYDESVNLSPLSSPIPHSPLVRART.

Lys-278 carries the N6-(pyridoxal phosphate)lysine modification.

This sequence belongs to the class-I pyridoxal-phosphate-dependent aminotransferase family. In terms of assembly, homodimer. Requires pyridoxal 5'-phosphate as cofactor.

The catalysed reaction is S-adenosyl-L-methionine = 1-aminocyclopropane-1-carboxylate + S-methyl-5'-thioadenosine + H(+). The protein operates within alkene biosynthesis; ethylene biosynthesis via S-adenosyl-L-methionine; ethylene from S-adenosyl-L-methionine: step 1/2. Its function is as follows. Catalyzes the formation of 1-aminocyclopropane-1-carboxylate, a direct precursor of ethylene in higher plants. This Nicotiana tabacum (Common tobacco) protein is 1-aminocyclopropane-1-carboxylate synthase (ACS1).